The following is a 389-amino-acid chain: Protein Wnt-10b (389 aa).

Residues M1–S28 form the signal peptide. T46 is subject to Phosphothreonine. Disulfide bonds link C83/C94, C136/C144, C146/C199, C247/C261, C249/C256, C318/C349, C334/C344, C348/C388, C364/C379, C366/C376, and C371/C372. An N-linked (GlcNAc...) asparagine glycan is attached at N93. The tract at residues K171–G197 is disordered. The span at L177–G189 shows a compositional bias: pro residues. S253 carries O-palmitoleoyl serine; by PORCN lipidation. N335 carries N-linked (GlcNAc...) asparagine glycosylation.

It belongs to the Wnt family. In terms of assembly, forms a soluble 1:1 complex with AFM; this prevents oligomerization and is required for prolonged biological activity. The complex with AFM may represent the physiological form in body fluids. Palmitoleoylation is required for efficient binding to frizzled receptors. Depalmitoleoylation leads to Wnt signaling pathway inhibition. As to expression, detected in most adult tissues. Highest levels were found in heart and skeletal muscle. Low levels are found in brain.

It is found in the secreted. Its subcellular location is the extracellular space. The protein resides in the extracellular matrix. Functionally, member of the Wnt ligand gene family that encodes for secreted proteins, which activate the Wnt signaling cascade. Specifically activates canonical Wnt/beta-catenin signaling and thus triggers beta-catenin/LEF/TCF-mediated transcriptional programs. Involved in signaling networks controlling stemness, pluripotency and cell fate decisions. Acts in the immune system, mammary gland, adipose tissue, bone and skin. The chain is Protein Wnt-10b (WNT10B) from Homo sapiens (Human).